We begin with the raw amino-acid sequence, 505 residues long: Catalase (505 aa).

Active-site residues include His56 and Asn129. A heme-binding site is contributed by Tyr339.

It belongs to the catalase family. Requires heme as cofactor.

It localises to the cytoplasm. The enzyme catalyses 2 H2O2 = O2 + 2 H2O. Decomposes hydrogen peroxide into water and oxygen; serves to protect cells from the toxic effects of hydrogen peroxide. In Helicobacter pylori (strain ATCC 700392 / 26695) (Campylobacter pylori), this protein is Catalase (katA).